A 162-amino-acid polypeptide reads, in one-letter code: Phenazine biosynthesis protein PhzA2 (162 aa).

It belongs to the PhzA/PhzB family.

The protein operates within antibiotic biosynthesis; phenazine biosynthesis. In terms of biological role, involved in the biosynthesis of the antibiotic phenazine, a nitrogen-containing heterocyclic molecule having important roles in virulence, competition and biological control. PhzA2 (operon phzA2B2C2E2F2G2) has a role in the biosynthesis of the phenazine during both planktonic growth and biofilm development, and in host infection during biofilm development. This Pseudomonas aeruginosa (strain ATCC 15692 / DSM 22644 / CIP 104116 / JCM 14847 / LMG 12228 / 1C / PRS 101 / PAO1) protein is Phenazine biosynthesis protein PhzA2.